Consider the following 496-residue polypeptide: O-acetyltransferase cpsE (496 aa).

The span at 203-217 (IGTQGQLPDGVQSSD) shows a compositional bias: polar residues. Positions 203–228 (IGTQGQLPDGVQSSDDPTDGAGDIFE) are disordered.

The protein belongs to the fumigaclavine B O-acetyltransferase family.

The catalysed reaction is campesine A + acetyl-CoA = campesine C + CoA. The protein operates within alkaloid biosynthesis. O-acetyltransferase; part of the gene cluster that mediates the biosynthesis of campesine G, a dimeric indole piperazine alkaloid that shows good insecticidal activity Galleria mellonella. Within the pathway, cpsE acetylates N13 of campesine A to produce campesine C. CpsE produces an inseparable mixture of two acyl-atropisomers due to the spontaneous rotation of an acyl group at N13 of piperazine ring. The non-canonical non-ribosomal peptide synthetase cpsA catalyzes the first steps of the pathway by producing L-tryptophanal and L-valinal from their respective amino-acids. These products condensate spontaneously to form trypyl-valyl pyrazine also known as didehydrocampesine A. The NmrA-like family domain-containing oxidoreductase cpsB is the next enzyme in cps pathway and reduces the unstable didehydrocampesine A to campesine A. The methyltransferase cpsF and the acetyltransferase cpsE both recognize N13 of piperazine ring to carry out methylation and acetylation of campesine A to produce campesine C and B, respectively. The cytochrome P450 monooxygenase cpsD then acts as a dimerase that catalyzes oxidative heterocoupling between campesine B and C to produce heterodimers with unexpected 6/5/6/6/6/6/5/6 eight-ring scaffold called campesine D. Finally,the cytochrome P450 monooxygenase cpsC is a regioselective dehydrogenase that catalyzes dehydrogenation reaction towards C2-N1 to produce campesine G. This chain is O-acetyltransferase cpsE, found in Aspergillus campestris (strain IBT 28561).